The chain runs to 433 residues: 26S proteasome regulatory subunit 7 (433 aa).

Residues 1-22 (MPDYLGADQRKTKEDEKDDKPI) form a disordered region. Over residues 8–22 (DQRKTKEDEKDDKPI) the composition is skewed to basic and acidic residues. Lys116 carries the post-translational modification N6-acetyllysine. Residue 216–223 (GPPGTGKT) coordinates ATP. The residue at position 422 (Lys422) is an N6-acetyllysine.

It belongs to the AAA ATPase family. Component of the 19S proteasome regulatory particle complex. The 26S proteasome consists of a 20S core particle (CP) and two 19S regulatory subunits (RP). The regulatory particle is made of a lid composed of 9 subunits, a base containing 6 ATPases including PSMC2 and few additional components. Interacts with NDC80/HEC; this interaction is detected only during M phase. Interacts and SQSTM1. Interacts with PAAF1. Directly interacts with TRIM5. In terms of processing, monoubiquitinated by RNF181. Post-translationally, phosphorylated. Dephosphorylated by UBLCP1 which impairs PSMC2 ATPase activity and disrupts 26S proteasome assembly.

The protein localises to the cytoplasm. Its subcellular location is the nucleus. Component of the 26S proteasome, a multiprotein complex involved in the ATP-dependent degradation of ubiquitinated proteins. This complex plays a key role in the maintenance of protein homeostasis by removing misfolded or damaged proteins, which could impair cellular functions, and by removing proteins whose functions are no longer required. Therefore, the proteasome participates in numerous cellular processes, including cell cycle progression, apoptosis, or DNA damage repair. PSMC2 belongs to the heterohexameric ring of AAA (ATPases associated with diverse cellular activities) proteins that unfolds ubiquitinated target proteins that are concurrently translocated into a proteolytic chamber and degraded into peptides. The protein is 26S proteasome regulatory subunit 7 (PSMC2) of Pongo abelii (Sumatran orangutan).